Here is a 90-residue protein sequence, read N- to C-terminus: Probable Fe(2+)-trafficking protein (90 aa).

Belongs to the Fe(2+)-trafficking protein family.

Could be a mediator in iron transactions between iron acquisition and iron-requiring processes, such as synthesis and/or repair of Fe-S clusters in biosynthetic enzymes. This Laribacter hongkongensis (strain HLHK9) protein is Probable Fe(2+)-trafficking protein.